Consider the following 86-residue polypeptide: YcgL domain-containing protein Smlt4554 (86 aa).

The region spanning 1–85 is the YcgL domain; sequence MHAYVYKSQL…SVASLMPRHY (85 aa).

This is YcgL domain-containing protein Smlt4554 from Stenotrophomonas maltophilia (strain K279a).